We begin with the raw amino-acid sequence, 61 residues long: Small ribosomal subunit protein uS14 (61 aa).

Zn(2+)-binding residues include Cys24, Cys27, Cys40, and Cys43.

The protein belongs to the universal ribosomal protein uS14 family. Zinc-binding uS14 subfamily. In terms of assembly, part of the 30S ribosomal subunit. Contacts proteins S3 and S10. Requires Zn(2+) as cofactor.

Its function is as follows. Binds 16S rRNA, required for the assembly of 30S particles and may also be responsible for determining the conformation of the 16S rRNA at the A site. This chain is Small ribosomal subunit protein uS14, found in Macrococcus caseolyticus (strain JCSC5402) (Macrococcoides caseolyticum).